The following is a 270-amino-acid chain: Phospholysine phosphohistidine inorganic pyrophosphate phosphatase (270 aa).

Residues Asp-17 and Ser-19 each contribute to the Mg(2+) site. Residues 17–19 (DIS), 54–55 (TN), and Lys-189 each bind substrate. Asp-214 lines the Mg(2+) pocket.

It belongs to the HAD-like hydrolase superfamily. Homodimer. Mg(2+) is required as a cofactor.

It localises to the cytoplasm. The protein localises to the nucleus. The enzyme catalyses diphosphate + H2O = 2 phosphate + H(+). Functionally, phosphatase that hydrolyzes imidodiphosphate, 3-phosphohistidine and 6-phospholysine. Has broad substrate specificity and can also hydrolyze inorganic diphosphate, but with lower efficiency. In Mus musculus (Mouse), this protein is Phospholysine phosphohistidine inorganic pyrophosphate phosphatase (Lhpp).